The sequence spans 209 residues: Uridine kinase (209 aa).

12–19 (GGSGSGKT) contacts ATP.

This sequence belongs to the uridine kinase family.

The protein localises to the cytoplasm. It carries out the reaction uridine + ATP = UMP + ADP + H(+). The catalysed reaction is cytidine + ATP = CMP + ADP + H(+). The protein operates within pyrimidine metabolism; CTP biosynthesis via salvage pathway; CTP from cytidine: step 1/3. Its pathway is pyrimidine metabolism; UMP biosynthesis via salvage pathway; UMP from uridine: step 1/1. The chain is Uridine kinase from Listeria welshimeri serovar 6b (strain ATCC 35897 / DSM 20650 / CCUG 15529 / CIP 8149 / NCTC 11857 / SLCC 5334 / V8).